We begin with the raw amino-acid sequence, 463 residues long: DDB1- and CUL4-associated factor 12-like protein 1 (463 aa).

Residues 1 to 35 form a disordered region; it reads MAQQQTGSRKRKAPAVEADAESSPSQGLAAADGEG. 6 WD repeats span residues 87–137, 138–184, 185–252, 253–297, 298–341, and 342–376; these read LTER…PLLR, DSEA…SLDP, LCLG…DVEA, IPRA…ALSR, LLSI…QQNI, and RPLC…LFYD.

The protein belongs to the WD repeat DCAF12 family.

The chain is DDB1- and CUL4-associated factor 12-like protein 1 (DCAF12L1) from Homo sapiens (Human).